The primary structure comprises 529 residues: Potassium voltage-gated channel subfamily A member 6 (529 aa).

A disordered region spans residues 1-35 (MRSEKSLTLAAPGEVRGPEGEQQDAGEFQEAEGGG). Over 1–171 (MRSEKSLTLA…LLFEYPESSG (171 aa)) the chain is Cytoplasmic. The residue at position 3 (S3) is a Phosphoserine. Residues 21 to 30 (EQQDAGEFQE) show a composition bias toward acidic residues. The helical transmembrane segment at 172 to 193 (PARGIAIVSVLVILISIVIFCL) threads the bilayer. Over 194–262 (ETLPQFRADG…TLGGSFFTDP (69 aa)) the chain is Extracellular. A disordered region spans residues 203–238 (GRGGSNEGSGTRLSPASRSHEEEDEDEDSYAFPGSI). The span at 210 to 219 (GSGTRLSPAS) shows a compositional bias: polar residues. A helical transmembrane segment spans residues 263–284 (FFLVETLCIVWFTFELLVRFSA). C285 is lipidated: S-palmitoyl cysteine. The Cytoplasmic portion of the chain corresponds to 285 to 295 (CPSKAAFFRNI). Residues 296-316 (MNIIDLVAIFPYFITLGTELV) form a helical membrane-spanning segment. At 317 to 337 (QRHEQQSVSGGSGQNGQQAMS) the chain is on the extracellular side. A helical; Voltage-sensor membrane pass occupies residues 338-358 (LAILRVIRLVRVFRIFKLSRH). The Cytoplasmic segment spans residues 359–373 (SKGLQILGKTLQASM). An S4-S5 linker region spans residues 360 to 373 (KGLQILGKTLQASM). A helical transmembrane segment spans residues 374–395 (RELGLLIFFLFIGVILFSSAVY). Residues 396–409 (FAEADDVDSLFPSI) are Extracellular-facing. Positions 410–421 (PDAFWWAVVTMT) form an intramembrane region, helical. The short motif at 422–427 (TVGYGD) is the Selectivity filter element. The stretch at 422 to 429 (TVGYGDMY) is an intramembrane region. Over 430 to 436 (PMTVGGK) the chain is Extracellular. The chain crosses the membrane as a helical span at residues 437–465 (IVGSLCAIAGVLTIALPVPVIVSNFNYFY). Residues 466–529 (HRETEQEEQG…YAEKRMLTEV (64 aa)) lie on the Cytoplasmic side of the membrane. The segment at 488–513 (DLKATDNGLGKPDFAEASRERRPSYL) is disordered. Residues 500-510 (DFAEASRERRP) are compositionally biased toward basic and acidic residues. The residue at position 511 (S511) is a Phosphoserine; by PKA. The PDZ-binding motif lies at 527–529 (TEV).

It belongs to the potassium channel family. A (Shaker) (TC 1.A.1.2) subfamily. Kv1.6/KCNA6 sub-subfamily. As to quaternary structure, homotetramer and heterotetramer of potassium channel proteins. Interacts with KCNAB1 and KCNAB2.

It is found in the cell membrane. The catalysed reaction is K(+)(in) = K(+)(out). Its function is as follows. Voltage-gated potassium channel that mediates transmembrane potassium transport in excitable membranes. Forms tetrameric potassium-selective channels through which potassium ions pass in accordance with their electrochemical gradient. The channel alternates between opened and closed conformations in response to the voltage difference across the membrane. Can form functional homotetrameric channels and heterotetrameric channels that contain variable proportions of KCNA1, KCNA2, KCNA4, KCNA6, and possibly other family members as well; channel properties depend on the type of alpha subunits that are part of the channel. Channel properties are modulated by cytoplasmic beta subunits that regulate the subcellular location of the alpha subunits and promote rapid inactivation. Homotetrameric channels display rapid activation and slow inactivation. The polypeptide is Potassium voltage-gated channel subfamily A member 6 (Kcna6) (Mus musculus (Mouse)).